Reading from the N-terminus, the 241-residue chain is Phycocyanobilin:ferredoxin oxidoreductase (241 aa).

This sequence belongs to the HY2 family.

It carries out the reaction (2R,3Z)-phycocyanobilin + 4 oxidized [2Fe-2S]-[ferredoxin] = biliverdin IXalpha + 4 reduced [2Fe-2S]-[ferredoxin] + 4 H(+). Catalyzes the four-electron reduction of biliverdin IX-alpha (2-electron reduction at both the A and D rings); the reaction proceeds via an isolatable 2-electron intermediate, 181,182-dihydrobiliverdin. The sequence is that of Phycocyanobilin:ferredoxin oxidoreductase from Prochlorococcus marinus (strain MIT 9312).